The following is a 121-amino-acid chain: Large ribosomal subunit protein bL19 (121 aa).

The protein belongs to the bacterial ribosomal protein bL19 family.

Its function is as follows. This protein is located at the 30S-50S ribosomal subunit interface and may play a role in the structure and function of the aminoacyl-tRNA binding site. This chain is Large ribosomal subunit protein bL19, found in Legionella pneumophila (strain Paris).